The primary structure comprises 119 residues: DNA-directed RNA polymerase subunit omega (119 aa).

Belongs to the RNA polymerase subunit omega family. In terms of assembly, the RNAP catalytic core consists of 2 alpha, 1 beta, 1 beta' and 1 omega subunit. When a sigma factor is associated with the core the holoenzyme is formed, which can initiate transcription.

The catalysed reaction is RNA(n) + a ribonucleoside 5'-triphosphate = RNA(n+1) + diphosphate. In terms of biological role, promotes RNA polymerase assembly. Latches the N- and C-terminal regions of the beta' subunit thereby facilitating its interaction with the beta and alpha subunits. This Caulobacter vibrioides (strain ATCC 19089 / CIP 103742 / CB 15) (Caulobacter crescentus) protein is DNA-directed RNA polymerase subunit omega (rpoZ).